A 367-amino-acid polypeptide reads, in one-letter code: Aflatoxin B1 aldehyde reductase member 2 (367 aa).

A mitochondrion-targeting transit peptide spans M1–P46. A disordered region spans residues P27 to P46. S40 carries the phosphoserine modification. T48 is modified (phosphothreonine). D80 contacts NADP(+). Y85 acts as the Proton donor in catalysis. The residue at position 136 (K136) is an N6-acetyllysine. H149 is a binding site for substrate. Residues S179–N180, Q205, N234–K244, and R258 contribute to the NADP(+) site. An N6-succinyllysine modification is found at K244. S263 is subject to Phosphoserine. Positions 268 and 271 each coordinate substrate. S326–N334 lines the NADP(+) pocket. A substrate-binding site is contributed by R367.

The protein belongs to the aldo/keto reductase family. Aldo/keto reductase 2 subfamily. In terms of assembly, homodimer. Heterodimer with AKR7A1.

The protein localises to the mitochondrion. It localises to the golgi apparatus. Its subcellular location is the golgi stack. The protein resides in the cytoplasm. The enzyme catalyses 4-hydroxybutanoate + NADP(+) = succinate semialdehyde + NADPH + H(+). In terms of biological role, catalyzes the NADPH-dependent reduction of succinic semialdehyde to gamma-hydroxybutyrate. May have an important role in producing the neuromodulator gamma-hydroxybutyrate (GHB). Has broad substrate specificity. Can reduce the dialdehyde protein-binding form of aflatoxin B1 (AFB1) to the non-binding AFB1 dialcohol. Acts as a 2-carboxybenzaldehyde reductase. The protein is Aflatoxin B1 aldehyde reductase member 2 (Akr7a2) of Rattus norvegicus (Rat).